The chain runs to 134 residues: Small ribosomal subunit protein uS11 (134 aa).

The protein belongs to the universal ribosomal protein uS11 family. As to quaternary structure, part of the 30S ribosomal subunit. Interacts with proteins S7 and S18. Binds to IF-3.

Its function is as follows. Located on the platform of the 30S subunit, it bridges several disparate RNA helices of the 16S rRNA. Forms part of the Shine-Dalgarno cleft in the 70S ribosome. The protein is Small ribosomal subunit protein uS11 of Leptothrix cholodnii (strain ATCC 51168 / LMG 8142 / SP-6) (Leptothrix discophora (strain SP-6)).